The primary structure comprises 452 residues: Exodeoxyribonuclease 7 large subunit (452 aa).

This sequence belongs to the XseA family. In terms of assembly, heterooligomer composed of large and small subunits.

It localises to the cytoplasm. The enzyme catalyses Exonucleolytic cleavage in either 5'- to 3'- or 3'- to 5'-direction to yield nucleoside 5'-phosphates.. In terms of biological role, bidirectionally degrades single-stranded DNA into large acid-insoluble oligonucleotides, which are then degraded further into small acid-soluble oligonucleotides. This is Exodeoxyribonuclease 7 large subunit from Bacillus cereus (strain 03BB102).